The primary structure comprises 229 residues: Galactonate operon transcriptional repressor (229 aa).

Residues 1–71 (MTLNKTDRIV…RYRGAFVAPR (71 aa)) enclose the HTH gntR-type domain. Residues 31–50 (EAELCEEFATSRNIIREVFR) constitute a DNA-binding region (H-T-H motif). Residues Asp146, His150, and His195 each contribute to the Zn(2+) site.

In terms of assembly, homodimer.

D-galactonate binds DgoR and induces a conformational change in the protein, which decreases its affinity for DNA and consequently derepresses transcription of the dgoRKADT operon. In terms of biological role, involved in the regulation of D-galactonate metabolism. Represses the expression of the dgoRKADT operon by binding to two closely spaced inverted repeats in the cis-acting element, which overlap with the D-galactonate responsive dgo promoter. Employs a derepression mechanism using D-galactonate as a specific effector molecule. This is Galactonate operon transcriptional repressor from Escherichia coli (strain K12).